A 158-amino-acid polypeptide reads, in one-letter code: 6,7-dimethyl-8-ribityllumazine synthase (158 aa).

5-amino-6-(D-ribitylamino)uracil is bound by residues Phe22, 56 to 58 (ALE), and 80 to 82 (VVI). 85–86 (ET) provides a ligand contact to (2S)-2-hydroxy-3-oxobutyl phosphate. His88 functions as the Proton donor in the catalytic mechanism. Asn113 serves as a coordination point for 5-amino-6-(D-ribitylamino)uracil. A (2S)-2-hydroxy-3-oxobutyl phosphate-binding site is contributed by Arg127.

This sequence belongs to the DMRL synthase family.

The catalysed reaction is (2S)-2-hydroxy-3-oxobutyl phosphate + 5-amino-6-(D-ribitylamino)uracil = 6,7-dimethyl-8-(1-D-ribityl)lumazine + phosphate + 2 H2O + H(+). Its pathway is cofactor biosynthesis; riboflavin biosynthesis; riboflavin from 2-hydroxy-3-oxobutyl phosphate and 5-amino-6-(D-ribitylamino)uracil: step 1/2. Functionally, catalyzes the formation of 6,7-dimethyl-8-ribityllumazine by condensation of 5-amino-6-(D-ribitylamino)uracil with 3,4-dihydroxy-2-butanone 4-phosphate. This is the penultimate step in the biosynthesis of riboflavin. The sequence is that of 6,7-dimethyl-8-ribityllumazine synthase from Neisseria gonorrhoeae (strain ATCC 700825 / FA 1090).